A 241-amino-acid chain; its full sequence is Mitochondrial inner membrane protease ATP23 (241 aa).

Residue histidine 141 participates in a divalent metal cation binding. The active site involves glutamate 142. Histidine 145 contributes to the a divalent metal cation binding site.

The protein belongs to the peptidase M76 family.

It is found in the mitochondrion inner membrane. Has a dual role in the assembly of mitochondrial ATPase. Acts as a protease that removes N-terminal residues of mitochondrial ATPase CF(0) subunit 6 at the intermembrane space side. Also involved in the correct assembly of the membrane-embedded ATPase CF(0) particle, probably mediating association of subunit 6 with the subunit 9 ring. This Lodderomyces elongisporus (strain ATCC 11503 / CBS 2605 / JCM 1781 / NBRC 1676 / NRRL YB-4239) (Yeast) protein is Mitochondrial inner membrane protease ATP23 (ATP23).